A 946-amino-acid polypeptide reads, in one-letter code: Altered inheritance of mitochondria protein 3 (946 aa).

Disordered stretches follow at residues 1–333 and 351–903; these read MGFW…PQMN and MSST…KSLE. The segment covering 36 to 54 has biased composition (basic residues); that stretch reads ASKKHYNNSKARRERKSGK. A phosphoserine mark is found at Ser57, Ser58, and Ser64. Acidic residues predominate over residues 59 to 68; that stretch reads DEEYESEDEM. A compositionally biased stretch (basic and acidic residues) spans 69-84; it reads EHERKPTDIRSLKDPK. Low complexity-rich tracts occupy residues 93–105 and 130–158; these read PGQK…QQQQ and QSQY…PPIY. The span at 166 to 244 shows a compositional bias: polar residues; it reads GSNSNATSYQ…YVSHGSTNLG (79 aa). Composition is skewed to low complexity over residues 245-267 and 306-320; these read QSQF…VLPS and QQQQ…QQQQ. Residues 351-364 are compositionally biased toward polar residues; the sequence is MSSTTNMQDSNPSY. Pro residues predominate over residues 376–392; sequence GGQPPVPVRMQPQPPQP. Over residues 463 to 472 the composition is skewed to polar residues; it reads IQPNTTSSAA. Ser473 is modified (phosphoserine). 3 stretches are compositionally biased toward basic and acidic residues: residues 485 to 499, 523 to 538, and 608 to 625; these read DNER…DEST, HGLD…KNAS, and EIKD…DRNV. Composition is skewed to low complexity over residues 627 to 642 and 666 to 675; these read PSLL…SQSQ and SQSSNSSDSS. Thr728 bears the Phosphothreonine mark. The segment covering 748 to 758 has biased composition (basic and acidic residues); the sequence is DSSKDANKYEK. A compositionally biased stretch (polar residues) spans 762 to 773; sequence PVTSSIQAQQST. Phosphothreonine is present on Thr860. Positions 861–878 are enriched in pro residues; it reads PPRPPPSRSSPKKVPPVV. Residues 887–898 are compositionally biased toward basic residues; it reads KKPPVVPKKKPL.

Belongs to the AIM3 family. As to quaternary structure, interacts with RVS167.

Its subcellular location is the membrane raft. The polypeptide is Altered inheritance of mitochondria protein 3 (AIM3) (Saccharomyces cerevisiae (strain Lalvin EC1118 / Prise de mousse) (Baker's yeast)).